The primary structure comprises 297 residues: Ribosomal RNA small subunit methyltransferase A (297 aa).

Residues Asn31, Leu33, Gly58, Glu79, Asp104, and Asn129 each contribute to the S-adenosyl-L-methionine site.

It belongs to the class I-like SAM-binding methyltransferase superfamily. rRNA adenine N(6)-methyltransferase family. RsmA subfamily.

It localises to the cytoplasm. It catalyses the reaction adenosine(1518)/adenosine(1519) in 16S rRNA + 4 S-adenosyl-L-methionine = N(6)-dimethyladenosine(1518)/N(6)-dimethyladenosine(1519) in 16S rRNA + 4 S-adenosyl-L-homocysteine + 4 H(+). Functionally, specifically dimethylates two adjacent adenosines (A1518 and A1519) in the loop of a conserved hairpin near the 3'-end of 16S rRNA in the 30S particle. May play a critical role in biogenesis of 30S subunits. This Staphylococcus aureus (strain MRSA252) protein is Ribosomal RNA small subunit methyltransferase A.